The sequence spans 99 residues: Ferredoxin-2 (99 aa).

The region spanning 4–96 is the 2Fe-2S ferredoxin-type domain; it reads YQVRLINKKR…DCTIRTHQEA (93 aa). [2Fe-2S] cluster is bound by residues Cys-42, Cys-47, Cys-50, and Cys-80.

It belongs to the 2Fe2S plant-type ferredoxin family. It depends on [2Fe-2S] cluster as a cofactor.

Functionally, ferredoxins are iron-sulfur proteins that transfer electrons in a wide variety of metabolic reactions. Donates electrons to the nitrogenase. This is Ferredoxin-2 (fdxH) from Leptolyngbya boryana (Plectonema boryanum).